A 1823-amino-acid chain; its full sequence is THO complex subunit 2 (1823 aa).

Residues 935–1003 are a coiled coil; sequence NRYESEISKQ…RRRLSREKDT (69 aa). The Nuclear localization signal signature appears at 964–969; it reads KRKKEK. 2 disordered regions span residues 1244 to 1382 and 1394 to 1823; these read LVGV…KDLN and ALSS…GSRE. Composition is skewed to basic and acidic residues over residues 1272–1283, 1312–1330, and 1356–1367; these read QMLKTKPLDGRT, KSME…DENP, and AKQDFGKDDGKS. Positions 1394 to 1409 are enriched in polar residues; it reads ALSSTAANGSIATGSS. The segment covering 1432–1596 has biased composition (basic and acidic residues); the sequence is PRHEIVTSVR…EKSHPDDHFH (165 aa). Pro residues predominate over residues 1600–1610; sequence LPPPPPLPPNI. Composition is skewed to basic and acidic residues over residues 1616-1625, 1636-1648, 1655-1706, and 1768-1785; these read AAKEDLERRA, PRHE…RSEE, DDAK…FEAS, and LGKE…DPIA. Ser-1646 and Ser-1696 each carry phosphoserine. The segment covering 1802-1816 has biased composition (polar residues); sequence MTVNGKTTRGEQSGS.

The protein belongs to the THOC2 family. Component of the THO complex, which is composed of THO1, THO2, THO3, THO5, THO6 and THO7.

The protein resides in the nucleus. Acts as a component of the THO subcomplex of the TREX complex which is thought to couple mRNA transcription, processing and nuclear export. This chain is THO complex subunit 2 (THO2), found in Arabidopsis thaliana (Mouse-ear cress).